Here is a 503-residue protein sequence, read N- to C-terminus: MEEFQGYFELDRSRQHDFLYPLLFREYIYALAHDHGLKKSILFENAGYDNKSSSIIVKRLITRMYQQNPLIFSANDSIQNPFFGQNKNFYSQIISEGFAVIVEIPFSLRLVSSLERKEIAKSHKLRAIHSIFPFLEDKFSHLDYVSDVLIPYHIHLEILVQTLRYWVNDASSLHLLRFFLHEYWNSLITQKNHITIFSKGNPRLFLFLYNSHICEYEYFFLFLRNQSSHLRSTSSGIFFERIYFYVKIEHFVKVFFDNDFQCILWFFKDPFMHYVRYQGKSILASKDTPLLMKKWKYYLVNLWQYHFYVWFQPGRIDINQLCKYSLYFLGYRSSVRLNSSVVRSQMLENSFLINNAMKKFETIVPIIPLIGSLSKANFCDTLGHPISKPTRADSSDSDIIDRFLRISRNLSHYHSGSSKKKSLYRVKYILRLSCVKTLARKHKKTVRTFLKRLGSEFLEEFLTEEEVVLSLIFPRTYSTSRRLYRGRIWYLDITSINDLVNYE.

Belongs to the intron maturase 2 family. MatK subfamily.

It is found in the plastid. The protein localises to the chloroplast. Functionally, usually encoded in the trnK tRNA gene intron. Probably assists in splicing its own and other chloroplast group II introns. This Eucalyptus globulus (Tasmanian blue gum) protein is Maturase K.